Consider the following 327-residue polypeptide: uncharacterized protein (327 aa).

The segment covering 1–17 (MASMAAAIAASRSAVMS) has biased composition (low complexity). Residues 1–22 (MASMAAAIAASRSAVMSGNRPL) form a disordered region. Ala-2 carries the N-acetylalanine modification. Residue Ser-37 is modified to Phosphoserine. The disordered stretch occupies residues 76–113 (GPRAPAPRDPGDSEELTRFPGLRGPTGQKVVRFGDEDL). Ser-129 is subject to Phosphoserine. Positions 134–148 (SISALSIQEPSNGTA) are enriched in polar residues. The interval 134–299 (SISALSIQEP…PDVRQDDGED (166 aa)) is disordered. Low complexity predominate over residues 162-176 (SQALKSSQGSRSSSL). Ser-175 is subject to Phosphoserine. Basic and acidic residues-rich tracts occupy residues 182–202 (TRKE…RGEG) and 233–252 (PAPK…RQEQ). Ser-289 carries the post-translational modification Phosphoserine.

It localises to the cytoplasm. This is an uncharacterized protein from Homo sapiens (Human).